A 476-amino-acid polypeptide reads, in one-letter code: Ribulose bisphosphate carboxylase large chain (476 aa).

Positions 1-2 (MS) are excised as a propeptide. P3 is subject to N-acetylproline. K14 carries the N6,N6,N6-trimethyllysine modification. Substrate contacts are provided by N123 and T173. The active-site Proton acceptor is the K175. A substrate-binding site is contributed by K177. K201, D203, and E204 together coordinate Mg(2+). The residue at position 201 (K201) is an N6-carboxylysine. Residues R295, H327, and S379 each contribute to the substrate site.

The protein belongs to the RuBisCO large chain family. Type I subfamily. Heterohexadecamer of 8 large chains and 8 small chains; disulfide-linked. The disulfide link is formed within the large subunit homodimers. It depends on Mg(2+) as a cofactor. In terms of processing, the disulfide bond which can form in the large chain dimeric partners within the hexadecamer appears to be associated with oxidative stress and protein turnover.

Its subcellular location is the plastid. The protein localises to the chloroplast. It carries out the reaction 2 (2R)-3-phosphoglycerate + 2 H(+) = D-ribulose 1,5-bisphosphate + CO2 + H2O. The enzyme catalyses D-ribulose 1,5-bisphosphate + O2 = 2-phosphoglycolate + (2R)-3-phosphoglycerate + 2 H(+). In terms of biological role, ruBisCO catalyzes two reactions: the carboxylation of D-ribulose 1,5-bisphosphate, the primary event in carbon dioxide fixation, as well as the oxidative fragmentation of the pentose substrate in the photorespiration process. Both reactions occur simultaneously and in competition at the same active site. The polypeptide is Ribulose bisphosphate carboxylase large chain (Barnadesia caryophylla (Xenophontia caryophylla)).